A 581-amino-acid chain; its full sequence is Putative ABC transporter ATP-binding protein MM_1996 (581 aa).

Residues 10-250 (IEIRDLWYTY…LEVFHRLGLR (241 aa)) enclose the ABC transporter 1 domain. 44-51 (GPTGCGKS) contacts ATP. The tract at residues 287–309 (GDYPASPGRKEKTSSPGWSSENN) is disordered. Residues 300–309 (SSPGWSSENN) are compositionally biased toward polar residues. Residues 313 to 541 (VSVRDLWSGY…IDILRKASLT (229 aa)) form the ABC transporter 2 domain. 346 to 353 (GTNGSGKS) lines the ATP pocket.

It belongs to the ABC transporter superfamily.

The protein localises to the cell membrane. In terms of biological role, probably part of an ABC transporter complex. Responsible for energy coupling to the transport system. The polypeptide is Putative ABC transporter ATP-binding protein MM_1996 (Methanosarcina mazei (strain ATCC BAA-159 / DSM 3647 / Goe1 / Go1 / JCM 11833 / OCM 88) (Methanosarcina frisia)).